The primary structure comprises 859 residues: ATP-dependent DNA helicase PIF1 (859 aa).

The N-terminal 45 residues, 1-45, are a transit peptide targeting the mitochondrion; the sequence is MPKWIRSTLNHIIPRRPFICSFNSFLLLKNVSHAKLSFSMSSRGF. A phosphoserine mark is found at serine 70 and serine 72. Residues 142 to 157 show a composition bias toward polar residues; it reads NSFDQSSQKKSRSTGF. Residues 142–183 form a disordered region; the sequence is NSFDQSSQKKSRSTGFKNPLRPALKKESSFDELQNSSISQER. A Phosphoserine modification is found at serine 169. The span at 172–182 shows a compositional bias: polar residues; it reads DELQNSSISQE. ATP is bound at residue 258 to 265; it reads GSAGTGKS. Phosphoserine is present on serine 584. The DNA-binding element occupies 727–746; that stretch reads QAYVALSRAVSREGLQVLNF. A disordered region spans residues 782 to 859; it reads KRKLDYAPGP…GQDTEDHILE (78 aa). The segment covering 800–809 has biased composition (low complexity); that stretch reads KSNSPAPISA. The span at 844 to 859 shows a compositional bias: basic and acidic residues; that stretch reads VSDEPRGQDTEDHILE.

The protein belongs to the helicase family. PIF1 subfamily. As to quaternary structure, monomer in solution. DNA binding induces dimerization. Associates with mitochondrial and telomeric DNA. Binding to mtDNA is non-specific and the protein seems to coat the entire mtDNA molecule. Binds to the telomerase RNA TLC1. Interacts with the mitochondrial single-strand DNA-binding protein RIM1. Mg(2+) serves as cofactor. It depends on Mn(2+) as a cofactor. Post-translationally, phosphorylated. Undergoes RAD53-dependent phosphorylation in response to loss of mtDNA.

It is found in the nucleus. It localises to the nucleolus. Its subcellular location is the mitochondrion inner membrane. It carries out the reaction Couples ATP hydrolysis with the unwinding of duplex DNA at the replication fork by translocating in the 5'-3' direction. This creates two antiparallel DNA single strands (ssDNA). The leading ssDNA polymer is the template for DNA polymerase III holoenzyme which synthesizes a continuous strand.. It catalyses the reaction ATP + H2O = ADP + phosphate + H(+). Its function is as follows. DNA-dependent ATPase and 5'-3' DNA helicase required for the maintenance of both mitochondrial and nuclear genome stability. Efficiently unwinds G-quadruplex (G4) DNA structures and forked RNA-DNA hybrids. Appears to move along DNA in single nucleotide or base pair steps, powered by hydrolysis of 1 molecule of ATP. Processes at an unwinding rate of about 75 bp/s. Resolves G4 structures, preventing replication pausing and double-strand breaks (DSBs) at G4 motifs. Involved in the maintenance of telomeric DNA. Inhibits telomere elongation, de novo telomere formation and telomere addition to DSBs via catalytic inhibition of telomerase. Reduces the processivity of telomerase by displacing active telomerase from DNA ends. Releases telomerase by unwinding the short telomerase RNA/telomeric DNA hybrid that is the intermediate in the telomerase reaction. Involved in the maintenance of ribosomal (rDNA). Required for efficient fork arrest at the replication fork barrier within rDNA. Involved in the maintenance of mitochondrial (mtDNA). Required to maintain mtDNA under conditions that introduce dsDNA breaks in mtDNA, either preventing or repairing dsDNA breaks. May inhibit replication progression to allow time for repair. May have a general role in chromosomal replication by affecting Okazaki fragment maturation. May have a role in conjunction with DNA2 helicase/nuclease in 5'-flap extension during Okazaki fragment processing. This is ATP-dependent DNA helicase PIF1 from Saccharomyces cerevisiae (strain YJM789) (Baker's yeast).